The chain runs to 1770 residues: U3 small nucleolar RNA-associated protein 10 (1770 aa).

2 consecutive transmembrane segments (helical) span residues 499–519 (ILGL…FLSS) and 528–548 (LTFL…RLLA). The HEAT repeat unit spans residues 1730–1768 (MVPIIAELLEDDNEEVESEVRGGLVRVMENVLGEPFDRY).

Belongs to the HEATR1/UTP10 family. In terms of assembly, component of the ribosomal small subunit (SSU) processome.

Its subcellular location is the nucleus. It is found in the nucleolus. The protein resides in the membrane. In terms of biological role, involved in nucleolar processing of pre-18S ribosomal RNA. Involved in ribosome biosynthesis. The protein is U3 small nucleolar RNA-associated protein 10 of Candida glabrata (strain ATCC 2001 / BCRC 20586 / JCM 3761 / NBRC 0622 / NRRL Y-65 / CBS 138) (Yeast).